Consider the following 353-residue polypeptide: S-adenosylmethionine:tRNA ribosyltransferase-isomerase (353 aa).

The protein belongs to the QueA family. Monomer.

Its subcellular location is the cytoplasm. It catalyses the reaction 7-aminomethyl-7-carbaguanosine(34) in tRNA + S-adenosyl-L-methionine = epoxyqueuosine(34) in tRNA + adenine + L-methionine + 2 H(+). It participates in tRNA modification; tRNA-queuosine biosynthesis. Transfers and isomerizes the ribose moiety from AdoMet to the 7-aminomethyl group of 7-deazaguanine (preQ1-tRNA) to give epoxyqueuosine (oQ-tRNA). In Paraburkholderia phymatum (strain DSM 17167 / CIP 108236 / LMG 21445 / STM815) (Burkholderia phymatum), this protein is S-adenosylmethionine:tRNA ribosyltransferase-isomerase.